The chain runs to 185 residues: uncharacterized protein (185 aa).

The signal sequence occupies residues 1 to 29 (MKNQEIIEVKSKMFLRIWAFVGSAGMGLA). A lipid anchor (N-palmitoyl cysteine) is attached at Cys30. Cys30 is lipidated: S-diacylglycerol cysteine. The chain crosses the membrane as a helical span at residues 45-67 (YLLAIPAGFLFTLFCLYLFIIFF).

The protein to B.subtilis YfjE.

It is found in the cell membrane. This is an uncharacterized protein from Bacillus subtilis (strain 168).